A 350-amino-acid chain; its full sequence is tRNA pseudouridine synthase D (350 aa).

The active-site Nucleophile is the D85. The TRUD domain maps to 160–310 (GVINYFGEQR…EAARRTILLR (151 aa)).

Belongs to the pseudouridine synthase TruD family.

It carries out the reaction uridine(13) in tRNA = pseudouridine(13) in tRNA. Its function is as follows. Responsible for synthesis of pseudouridine from uracil-13 in transfer RNAs. The sequence is that of tRNA pseudouridine synthase D from Idiomarina loihiensis (strain ATCC BAA-735 / DSM 15497 / L2-TR).